Reading from the N-terminus, the 371-residue chain is tRNA-specific 2-thiouridylase MnmA (371 aa).

ATP contacts are provided by residues 13–20 and Met39; that span reads GMSGGVDS. The interval 99-101 is interaction with target base in tRNA; it reads NPD. The Nucleophile role is filled by Cys104. A disulfide bond links Cys104 and Cys200. Gly128 contacts ATP. The segment at 150–152 is interaction with tRNA; it reads KDQ. The Cysteine persulfide intermediate role is filled by Cys200. Positions 308–309 are interaction with tRNA; it reads RY.

Belongs to the MnmA/TRMU family.

It localises to the cytoplasm. The enzyme catalyses S-sulfanyl-L-cysteinyl-[protein] + uridine(34) in tRNA + AH2 + ATP = 2-thiouridine(34) in tRNA + L-cysteinyl-[protein] + A + AMP + diphosphate + H(+). In terms of biological role, catalyzes the 2-thiolation of uridine at the wobble position (U34) of tRNA, leading to the formation of s(2)U34. In Bacillus thuringiensis (strain Al Hakam), this protein is tRNA-specific 2-thiouridylase MnmA.